A 202-amino-acid polypeptide reads, in one-letter code: NADH-quinone oxidoreductase subunit C (202 aa).

The protein belongs to the complex I 30 kDa subunit family. As to quaternary structure, NDH-1 is composed of 14 different subunits. Subunits NuoB, C, D, E, F, and G constitute the peripheral sector of the complex.

The protein resides in the cell inner membrane. It carries out the reaction a quinone + NADH + 5 H(+)(in) = a quinol + NAD(+) + 4 H(+)(out). NDH-1 shuttles electrons from NADH, via FMN and iron-sulfur (Fe-S) centers, to quinones in the respiratory chain. The immediate electron acceptor for the enzyme in this species is believed to be ubiquinone. Couples the redox reaction to proton translocation (for every two electrons transferred, four hydrogen ions are translocated across the cytoplasmic membrane), and thus conserves the redox energy in a proton gradient. This is NADH-quinone oxidoreductase subunit C from Acidovorax sp. (strain JS42).